We begin with the raw amino-acid sequence, 259 residues long: MIQIHALPAFNDNYIWLLQDLSSQQCAVVDPGDAKPVLGWLAQNPDYRLTDILITHHHNDHVGGVAELKQSTAARVLGPAAETIPARDIALVDNDRMTVLGLEFVVHAVPGHTLGHIAFYHEDATTPLLFSGDTLFAAGCGRLFEGTPQQMHDSLGRLAKLPDSTLIYCAHEYTLSNLRFAQAVEPANVDIAERLAEVTRWRSENRISLPSNMALEKRTNPFLRTGETSVKEKADERSDAQNTSQSAVFASLRAWKDKF.

7 residues coordinate Zn(2+): histidine 56, histidine 58, aspartate 60, histidine 61, histidine 112, aspartate 133, and histidine 171. The interval 220–243 (NPFLRTGETSVKEKADERSDAQNT) is disordered. The span at 229–239 (SVKEKADERSD) shows a compositional bias: basic and acidic residues.

This sequence belongs to the metallo-beta-lactamase superfamily. Glyoxalase II family. As to quaternary structure, monomer. Requires Zn(2+) as cofactor.

The catalysed reaction is an S-(2-hydroxyacyl)glutathione + H2O = a 2-hydroxy carboxylate + glutathione + H(+). It functions in the pathway secondary metabolite metabolism; methylglyoxal degradation; (R)-lactate from methylglyoxal: step 2/2. Its function is as follows. Thiolesterase that catalyzes the hydrolysis of S-D-lactoyl-glutathione to form glutathione and D-lactic acid. The sequence is that of Hydroxyacylglutathione hydrolase from Pseudomonas syringae pv. syringae (strain B728a).